Consider the following 541-residue polypeptide: Amino-acid permease 2 (541 aa).

Residues 1 to 22 are compositionally biased toward polar residues; that stretch reads MSFSPPNKSADATIQITEMTRQ. The segment at 1-43 is disordered; sequence MSFSPPNKSADATIQITEMTRQGTPSSGEAAASTPSTSSTESG. Residues 23-41 show a composition bias toward low complexity; it reads GTPSSGEAAASTPSTSSTE. Transmembrane regions (helical) follow at residues 66 to 86, 90 to 110, 139 to 159, 188 to 208, 214 to 234, 255 to 275, 301 to 321, 347 to 367, 399 to 419, 424 to 444, 464 to 484, and 496 to 516; these read FSFA…WIYG, GGAA…WALA, VPFL…AGGA, VVGV…LPTA, TSGY…TLLV, GWSP…WIMT, ATTF…VCMG, PAIF…IPGI, PLIA…LGLA, IGAV…IPII, VWVN…FFFP, and YAIV…YTHG.

The protein belongs to the amino acid-polyamine-organocation (APC) superfamily.

It is found in the membrane. This chain is Amino-acid permease 2 (aap-2), found in Neurospora crassa (strain ATCC 24698 / 74-OR23-1A / CBS 708.71 / DSM 1257 / FGSC 987).